Reading from the N-terminus, the 147-residue chain is MRLSDYFPESSISVIHSAKDWQEAIDFSMVSLLDKNYISENYIQAIKDSTINNGPYYILAPGVAMPHARPECGALKTGMSLTLLEQGVYFPGNDEPIKLLIGLSAADADSHIGAIQALSELLCEEEILEQLLTASSEKQLADIISRG.

The PTS EIIA type-2 domain occupies 5 to 147 (DYFPESSISV…KQLADIISRG (143 aa)). The active-site Tele-phosphohistidine intermediate is H67. H67 is modified (phosphohistidine; by HPr).

It localises to the cytoplasm. Functionally, the phosphoenolpyruvate-dependent sugar phosphotransferase system (sugar PTS), a major carbohydrate active transport system, catalyzes the phosphorylation of incoming sugar substrates concomitantly with their translocation across the cell membrane. The enzyme II CmtAB PTS system is involved in D-mannitol transport. The protein is Mannitol-specific cryptic phosphotransferase enzyme IIA component (cmtB) of Escherichia coli O157:H7.